Here is a 356-residue protein sequence, read N- to C-terminus: MSLLSDLINLNLSDTTEKIIAEYIWIGGSGLDLRSKARTLPGPVSDPSKLPKWNYDGSSTGQAPGEDSEVIIYPQAIFKDPFRRGNNILVMCDAYTPAGEPIPTNKRHNAAKIFSHPDVVAEEPWYGIEQEYTLLQKDVNWPLGWPVGGFPGPQGPYYCGAGADKAFGRDIVDAHYKACLYAGINISGINGEVMPGQWEFQVGPAVGISAGDELWVARYILERITEIAGVVLSFDPKPIKGDWNGAGAHTNYSTKTMRNDGGYEVIKSAIEKLGKRHKEHIAAYGEGNERRLTGRHETADINTFLWGVANRGASIRVGRDTEKAGKGYFEDRRPASNMDPYVVTSMIADTTILWKP.

The GS beta-grasp domain occupies 19–99 (IIAEYIWIGG…VMCDAYTPAG (81 aa)). The disordered stretch occupies residues 41–66 (PGPVSDPSKLPKWNYDGSSTGQAPGE). The GS catalytic domain maps to 106 to 356 (KRHNAAKIFS…IADTTILWKP (251 aa)).

The protein belongs to the glutamine synthetase family. As to quaternary structure, homooctamer.

It localises to the cytoplasm. It carries out the reaction L-glutamate + NH4(+) + ATP = L-glutamine + ADP + phosphate + H(+). This Vigna aconitifolia (Moth bean) protein is Glutamine synthetase nodule isozyme.